The chain runs to 387 residues: 3-ketoacyl-CoA thiolase (387 aa).

Residue cysteine 91 is the Acyl-thioester intermediate of the active site. Residues histidine 343 and cysteine 373 each act as proton acceptor in the active site.

This sequence belongs to the thiolase-like superfamily. Thiolase family. In terms of assembly, heterotetramer of two alpha chains (FadB) and two beta chains (FadA).

It localises to the cytoplasm. The catalysed reaction is an acyl-CoA + acetyl-CoA = a 3-oxoacyl-CoA + CoA. It functions in the pathway lipid metabolism; fatty acid beta-oxidation. Catalyzes the final step of fatty acid oxidation in which acetyl-CoA is released and the CoA ester of a fatty acid two carbons shorter is formed. The sequence is that of 3-ketoacyl-CoA thiolase from Escherichia fergusonii (strain ATCC 35469 / DSM 13698 / CCUG 18766 / IAM 14443 / JCM 21226 / LMG 7866 / NBRC 102419 / NCTC 12128 / CDC 0568-73).